A 112-amino-acid chain; its full sequence is Notch-regulated ankyrin repeat-containing protein A (112 aa).

2 ANK repeats span residues Glu48–Leu77 and Glu81–Gly110.

The protein belongs to the NRARP family.

Regulates independently canonical Wnt and Notch signaling by modulating LEF1 and Notch protein turnover. Stabilizes LEF1, a pivotal transcription factor in the Wnt signaling cascade, by blocking its ubiquitination. Involved in angiogenesis; involved in intersegmental vessel patterning during development. The polypeptide is Notch-regulated ankyrin repeat-containing protein A (nrarpa) (Danio rerio (Zebrafish)).